The chain runs to 482 residues: Zinc finger protein 385B (482 aa).

The required for induction of apoptosis stretch occupies residues 1–105 (MNMATFLRGF…TGSACHTTTL (105 aa)). 2 Matrin-type zinc fingers span residues 34-64 (SFCE…RVKQ) and 169-199 (ISCN…KVKA). Disordered stretches follow at residues 54 to 75 (DGKS…PPVQ), 189 to 259 (KGSK…SFLL), and 268 to 287 (LGAI…SVAE). The interaction with p53/TP53 stretch occupies residues 106–482 (PALVRTPTLM…TPASILFAPY (377 aa)). Positions 231–240 (SSDKSEDKGK) are enriched in basic and acidic residues. Residues 294–328 (KKLLYCSLCKVAVNSLSQLEAHNTGSKHKTMVEAR) form a Matrin-type 3 zinc finger. Disordered stretches follow at residues 331-352 (AGPI…GSKG) and 378-397 (HISS…KPKY). The Matrin-type 4 zinc-finger motif lies at 360–390 (FHCEICDVHVNSEIQLKQHISSRRHKDRVAG).

In terms of assembly, interacts with p53/TP53; the interaction is direct.

It localises to the nucleus. In terms of biological role, may play a role in p53/TP53-mediated apoptosis. This chain is Zinc finger protein 385B (Znf385b), found in Mus musculus (Mouse).